A 514-amino-acid chain; its full sequence is MSVSKKPMVLVILDGYGYREDSQDNAIFNAKTPVMDALWAQRPHTLIDASGLEVGLPDRQMGNSEVGHVNLGAGRIVYQDLTRLDVEIKERTFFSNPTLTGAVDKAVSAGKAVHIMGLLSAGGVHSHEDHILAMVEMAAERGAEKIYLHAFLDGRDTPPRSAKSSLQTFEDKFAELGKGRVASIIGRYYAMDRDNRWDRVEQAYDLMTMAKGEFQFDTAVAGLEAAYARDENDEFVKATVIRAEGQADAAMEDGDALIFMNFRADRAREITRAFVNADFDGFARKKVVNLNFIMLTEYAADIKVPCAYPPASLANTLGEWMAKHDKTQLRISETEKYAHVTFFFNGGVEEPFKGEDRILINSPKVATYDLQPEMSSAELTEKLVAAITSGKYDTIICNYPNGDMVGHTGVMEAAVKAVETLDHCVEQVAKAVESVGGQLLITADHGNAEQMRDPSTGQAHTAHTNLPVPLIYVGEKSLKAVEGGKLSDIAPTMLTLMGMEIPKEMTGKPLFIVE.

2 residues coordinate Mn(2+): Asp-14 and Ser-64. Residue Ser-64 is the Phosphoserine intermediate of the active site. Substrate is bound by residues His-125, 155 to 156 (RD), Arg-187, Arg-193, 263 to 266 (RADR), and Lys-336. Residues Asp-403, His-407, Asp-444, His-445, and His-463 each coordinate Mn(2+).

The protein belongs to the BPG-independent phosphoglycerate mutase family. As to quaternary structure, monomer. It depends on Mn(2+) as a cofactor.

It catalyses the reaction (2R)-2-phosphoglycerate = (2R)-3-phosphoglycerate. The protein operates within carbohydrate degradation; glycolysis; pyruvate from D-glyceraldehyde 3-phosphate: step 3/5. Its function is as follows. Catalyzes the interconversion of 2-phosphoglycerate and 3-phosphoglycerate. The protein is 2,3-bisphosphoglycerate-independent phosphoglycerate mutase of Enterobacter sp. (strain 638).